The following is a 95-amino-acid chain: N(2)-fixation sustaining protein CowN (95 aa).

The protein belongs to the CowN family.

Is required to sustain N(2)-dependent growth in the presence of low levels of carbon monoxide (CO). Probably acts by protecting the N(2) fixation ability of the nitrogenase complex, which is inactivated in the presence of CO. This Allochromatium vinosum (strain ATCC 17899 / DSM 180 / NBRC 103801 / NCIMB 10441 / D) (Chromatium vinosum) protein is N(2)-fixation sustaining protein CowN.